A 325-amino-acid chain; its full sequence is Eukaryotic translation initiation factor 3 subunit I (325 aa).

4 WD repeats span residues 8-47 (GHER…RLGT), 50-91 (GHTG…ALLK), 144-183 (CNDS…VLVN), and 186-225 (EHSR…HQKT). T219 bears the Phosphothreonine mark. N6-acetyllysine is present on K264. K282 participates in a covalent cross-link: Glycyl lysine isopeptide (Lys-Gly) (interchain with G-Cter in ubiquitin). The stretch at 283–324 (GHFGLINSVAFHPDGKSYSSGGEDGYVRIHYFDPQYFEFEFE) is one WD 5 repeat. Phosphotyrosine is present on Y308.

It belongs to the eIF-3 subunit I family. As to quaternary structure, component of the eukaryotic translation initiation factor 3 (eIF-3) complex, which is composed of 13 subunits: EIF3A, EIF3B, EIF3C, EIF3D, EIF3E, EIF3F, EIF3G, EIF3H, EIF3I, EIF3J, EIF3K, EIF3L and EIF3M. The eIF-3 complex appears to include 3 stable modules: module A is composed of EIF3A, EIF3B, EIF3G and EIF3I; module B is composed of EIF3F, EIF3H, and EIF3M; and module C is composed of EIF3C, EIF3D, EIF3E, EIF3K and EIF3L. EIF3C of module C binds EIF3B of module A and EIF3H of module B, thereby linking the three modules. EIF3J is a labile subunit that binds to the eIF-3 complex via EIF3B. The eIF-3 complex interacts with RPS6KB1 under conditions of nutrient depletion. Mitogenic stimulation leads to binding and activation of a complex composed of MTOR and RPTOR, leading to phosphorylation and release of RPS6KB1 and binding of EIF4B to eIF-3. In terms of processing, phosphorylated by TGF-beta type II receptor.

It is found in the cytoplasm. Functionally, component of the eukaryotic translation initiation factor 3 (eIF-3) complex, which is required for several steps in the initiation of protein synthesis. The eIF-3 complex associates with the 40S ribosome and facilitates the recruitment of eIF-1, eIF-1A, eIF-2:GTP:methionyl-tRNAi and eIF-5 to form the 43S pre-initiation complex (43S PIC). The eIF-3 complex stimulates mRNA recruitment to the 43S PIC and scanning of the mRNA for AUG recognition. The eIF-3 complex is also required for disassembly and recycling of post-termination ribosomal complexes and subsequently prevents premature joining of the 40S and 60S ribosomal subunits prior to initiation. The eIF-3 complex specifically targets and initiates translation of a subset of mRNAs involved in cell proliferation, including cell cycling, differentiation and apoptosis, and uses different modes of RNA stem-loop binding to exert either translational activation or repression. This Pongo abelii (Sumatran orangutan) protein is Eukaryotic translation initiation factor 3 subunit I.